Consider the following 325-residue polypeptide: Diacylglycerol acyltransferase/mycolyltransferase Ag85B (325 aa).

The first 38 residues, 1-38 (MTFIDKIRGHWARRMTVAAVAALLLPGLVGVVGGSATA), serve as a signal peptide directing secretion. Residue 82–83 (LR) coordinates substrate. The segment at 98–108 (FEMFLDSGLSV) is fibronectin-binding. Cysteine 127 and cysteine 132 are joined by a disulfide. Serine 166 serves as a coordination point for substrate. The active-site Nucleophile is serine 166. Residue glutamate 272 is part of the active site. Residues 274–277 (LTIR) and 304–306 (HNW) each bind substrate. The active site involves histidine 304.

Belongs to the mycobacterial A85 antigen family.

Its subcellular location is the secreted. The catalysed reaction is 2 alpha,alpha'-trehalose 6-mycolate = alpha,alpha'-trehalose 6,6'-bismycolate + alpha,alpha-trehalose. It carries out the reaction an acyl-CoA + a 1,2-diacyl-sn-glycerol = a triacyl-sn-glycerol + CoA. In terms of biological role, the antigen 85 proteins (FbpA, FbpB, FbpC) are responsible for the high affinity of mycobacteria for fibronectin, a large adhesive glycoprotein. They also help to maintain the integrity of the cell wall by catalyzing the transfer of mycolic acids to cell wall arabinogalactan and through the synthesis of alpha,alpha-trehalose dimycolate (TDM, cord factor). They catalyze the transfer of a mycoloyl residue from one molecule of alpha,alpha-trehalose monomycolate (TMM) to another TMM, leading to the formation of TDM. This Mycolicibacterium smegmatis (strain ATCC 700084 / mc(2)155) (Mycobacterium smegmatis) protein is Diacylglycerol acyltransferase/mycolyltransferase Ag85B (fbpB).